The following is a 128-amino-acid chain: Translation initiation factor 5A (128 aa).

Lysine 35 bears the Hypusine mark.

Belongs to the eIF-5A family.

Its subcellular location is the cytoplasm. In terms of biological role, functions by promoting the formation of the first peptide bond. This is Translation initiation factor 5A (eIF5A) from Methanocella arvoryzae (strain DSM 22066 / NBRC 105507 / MRE50).